A 183-amino-acid chain; its full sequence is Adenylate kinase (183 aa).

Position 12 to 17 (12 to 17 (GAGKGT)) interacts with ATP. The tract at residues 32–61 (STGDLLRSEVAAGSELGKEAEAVMNRGELV) is NMP. Residues Thr-33, Arg-38, 59–61 (ELV), 86–89 (GFPR), and Gln-93 each bind AMP. Positions 127-133 (SRGRADD) are LID. Position 128 (Arg-128) interacts with ATP. Residues Arg-130 and Arg-141 each coordinate AMP. Residue Gly-169 coordinates ATP.

This sequence belongs to the adenylate kinase family. In terms of assembly, monomer.

It localises to the cytoplasm. The enzyme catalyses AMP + ATP = 2 ADP. It participates in purine metabolism; AMP biosynthesis via salvage pathway; AMP from ADP: step 1/1. Catalyzes the reversible transfer of the terminal phosphate group between ATP and AMP. Plays an important role in cellular energy homeostasis and in adenine nucleotide metabolism. This is Adenylate kinase from Synechococcus sp. (strain CC9902).